The chain runs to 114 residues: Fumarate reductase subunit D (114 aa).

Transmembrane regions (helical) follow at residues 24 to 44 (VSAI…PFGL), 50 to 70 (LITF…TIFP), and 92 to 112 (GGFI…FAVI).

This sequence belongs to the FrdD family. As to quaternary structure, part of an enzyme complex containing four subunits: a flavoprotein (FrdA), an iron-sulfur protein (FrdB), and two hydrophobic anchor proteins (FrdC and FrdD).

The protein resides in the cell inner membrane. Anchors the catalytic components of the fumarate reductase complex to the cell membrane, binds quinones. This Haemophilus influenzae (strain PittEE) protein is Fumarate reductase subunit D.